A 777-amino-acid polypeptide reads, in one-letter code: Proton-coupled zinc antiporter SLC30A5 (777 aa).

At 1-28 (MEEKYSSNVMSSGRLGPVDAPESRLTRY) the chain is on the cytoplasmic side. Residues 29-49 (IVLLCFTKFLKALGIFESYDL) traverse the membrane as a helical segment. Topologically, residues 50–52 (LKV) are lumenal. A helical membrane pass occupies residues 53 to 73 (VHIVQFIFILKLGSTCFMVLF). The Cytoplasmic segment spans residues 74–94 (QKPFSSGKSITKRQWVSIVKH). A helical transmembrane segment spans residues 95–115 (AFVSCIISLLWFFGLTLCGPL). Residues 116–117 (RT) lie on the Lumenal side of the membrane. Residues 118–138 (LLLFEHSDIVVISLLTVLFTG) traverse the membrane as a helical segment. The Cytoplasmic segment spans residues 139 to 148 (SGGGPSKTRG). A helical transmembrane segment spans residues 149-169 (AAFFIIAVICLLLFDNDDLMA). At 170–189 (KIAEHPEGHHDSALTHFLYR) the chain is on the lumenal side. Residues 190-210 (AFFLLGVADHKGGVLLLVLAL) traverse the membrane as a helical segment. The Cytoplasmic segment spans residues 211-234 (CFNVGFHTASRKLSLDIGGAKRLQ). Residues 235-255 (ALSHLVSVIILSPWVIILSAT) form a helical membrane-spanning segment. The Lumenal portion of the chain corresponds to 256 to 263 (TESKIESW). The helical transmembrane segment at 264 to 284 (SALIMPFMTVIFSVMIMDFYV) threads the bilayer. Topologically, residues 285-299 (ESVCSVKMEPSKCAR) are cytoplasmic. The helical transmembrane segment at 300–320 (YGSFLIFASALLLGNFWTHPI) threads the bilayer. Residues 321 to 338 (TDQLRAMNKPAHQLHTEH) are Lumenal-facing. Residues 339–359 (VLSGGVVVSAIFFILSAQILA) form a helical membrane-spanning segment. The Cytoplasmic segment spans residues 360–414 (SSSRKGQRGTLVGYSPEGTPLYNFMGDALHNTSPSMPRFLKDSLKQILEEYDSRQ). The chain crosses the membrane as a helical span at residues 415 to 435 (IFYFLCLNLAFTFVEIFYGVW). The Lumenal portion of the chain corresponds to 436–444 (TNSLGLLSD). The helical transmembrane segment at 445 to 465 (GFHMLFDCSALVMGLIAALMT) threads the bilayer. Zn(2+)-binding residues include His447 and Asp451. Topologically, residues 466 to 484 (RWKATRIFSYGYGRVEILS) are cytoplasmic. A helical membrane pass occupies residues 485 to 505 (GFINGLFLVVIAFFVFIEAVA). The Lumenal segment spans residues 506 to 516 (RIYDPPDINTD). Residues 517–537 (MLTPVSVGGLIVNLVGICAFS) traverse the membrane as a helical segment. Residues 538-586 (HAHSHGAARGGCPSHDHGHSHHGHGHSHGHNHGHSHSDHGHNHGHTHNH) are his-rich loop; required for zinc transport. Residues 538–604 (HAHSHGAARG…VGMNANMRGV (67 aa)) lie on the Cytoplasmic side of the membrane. The interval 547-593 (GGCPSHDHGHSHHGHGHSHGHNHGHSHSDHGHNHGHTHNHGHSHGSA) is disordered. 2 stretches are compositionally biased toward basic residues: residues 555 to 571 (GHSHHGHGHSHGHNHGH) and 579 to 589 (NHGHTHNHGHS). A helical membrane pass occupies residues 605–625 (FSHVLADTLGSVGVIVSTILI). The Zn(2+) site is built by His607 and Asp611. Over 626 to 629 (RQFG) the chain is Lumenal. A helical membrane pass occupies residues 630–650 (WLIADPLCSLFIAVLIFGSVL). Topologically, residues 651–777 (PLLKDACQVI…KYYKDGTYIM (127 aa)) are cytoplasmic.

The protein belongs to the cation diffusion facilitator (CDF) transporter (TC 2.A.4) family. SLC30A subfamily. Heterodimer with SLC30A6/ZNT6; form a functional zinc ion transmembrane transporter.

It is found in the golgi apparatus. It localises to the golgi stack membrane. Its subcellular location is the cytoplasmic vesicle. The protein resides in the COPII-coated vesicle membrane. The protein localises to the secretory vesicle membrane. It is found in the trans-Golgi network membrane. It catalyses the reaction Zn(2+)(in) + 2 H(+)(out) = Zn(2+)(out) + 2 H(+)(in). Together with SLC30A6 forms a functional proton-coupled zinc ion antiporter mediating zinc entry into the lumen of organelles along the secretory pathway. By contributing to zinc ion homeostasis within the early secretory pathway, regulates the activation and folding of enzymes like alkaline phosphatases and enzymes involved in phosphatidylinositol glycan anchor biosynthesis. This is Proton-coupled zinc antiporter SLC30A5 (slc30a5) from Xenopus tropicalis (Western clawed frog).